A 298-amino-acid polypeptide reads, in one-letter code: MAIPVTRMMVPHAIPSLRLSHPNPSRVDFLCRCAPSEIQPLRPELSLSVGIHAIPHPDKVEKGGEDAFFVSSYRGGVMAVADGVSGWAEQDVDPSLFSKELMANASRLVDDQEVRYDPGFLIDKAHTATTSRGSATIILAMLEEVGILKIGNVGDCGLKLLREGQIIFATAPQEHYFDCPYQLSSEGSAQTYLDASFSIVEVQKGDVIVMGSDGLFDNVFDHEIVSIVTKHTDVAESSRLLAEVASSHSRDTEFESPYALEARAKGFDVPLWKKVLGKKLTGGKLDDVTVIVAKVVSS.

Residues 48 to 295 (SVGIHAIPHP…DDVTVIVAKV (248 aa)) enclose the PPM-type phosphatase domain. Residues D82, G83, D213, and D286 each contribute to the Mn(2+) site.

Belongs to the PP2C family. The cofactor is Mg(2+). Requires Mn(2+) as cofactor.

The enzyme catalyses O-phospho-L-seryl-[protein] + H2O = L-seryl-[protein] + phosphate. It catalyses the reaction O-phospho-L-threonyl-[protein] + H2O = L-threonyl-[protein] + phosphate. In Arabidopsis thaliana (Mouse-ear cress), this protein is Probable protein phosphatase 2C 26.